The primary structure comprises 427 residues: Citrate synthase (427 aa).

Lys-283 carries the N6-acetyllysine modification. Active-site residues include His-306 and Asp-363.

Belongs to the citrate synthase family. As to quaternary structure, homohexamer.

The catalysed reaction is oxaloacetate + acetyl-CoA + H2O = citrate + CoA + H(+). It functions in the pathway carbohydrate metabolism; tricarboxylic acid cycle; isocitrate from oxaloacetate: step 1/2. The sequence is that of Citrate synthase (gltA) from Escherichia coli O6:H1 (strain CFT073 / ATCC 700928 / UPEC).